The sequence spans 583 residues: 2-succinyl-5-enolpyruvyl-6-hydroxy-3-cyclohexene-1-carboxylate synthase (583 aa).

This sequence belongs to the TPP enzyme family. MenD subfamily. As to quaternary structure, homodimer. Mg(2+) is required as a cofactor. It depends on Mn(2+) as a cofactor. Requires thiamine diphosphate as cofactor.

It catalyses the reaction isochorismate + 2-oxoglutarate + H(+) = 5-enolpyruvoyl-6-hydroxy-2-succinyl-cyclohex-3-ene-1-carboxylate + CO2. It participates in quinol/quinone metabolism; 1,4-dihydroxy-2-naphthoate biosynthesis; 1,4-dihydroxy-2-naphthoate from chorismate: step 2/7. The protein operates within quinol/quinone metabolism; menaquinone biosynthesis. In terms of biological role, catalyzes the thiamine diphosphate-dependent decarboxylation of 2-oxoglutarate and the subsequent addition of the resulting succinic semialdehyde-thiamine pyrophosphate anion to isochorismate to yield 2-succinyl-5-enolpyruvyl-6-hydroxy-3-cyclohexene-1-carboxylate (SEPHCHC). The protein is 2-succinyl-5-enolpyruvyl-6-hydroxy-3-cyclohexene-1-carboxylate synthase of Chlorobaculum parvum (strain DSM 263 / NCIMB 8327) (Chlorobium vibrioforme subsp. thiosulfatophilum).